The following is a 369-amino-acid chain: Core-capsid bridging protein (369 aa).

Residues 15–50 (APEIYGPPKKEEQDYKPRKLKRVKKKKKDDDDDELD) are disordered. A compositionally biased stretch (basic and acidic residues) spans 22-31 (PKKEEQDYKP). Residues 32–41 (RKLKRVKKKK) are compositionally biased toward basic residues. T85 carries the post-translational modification Phosphothreonine; by host. S166 bears the Phosphoserine; by host mark. A disordered region spans residues 307–342 (PGYRGYTYRPRRRATTRRRTTTGTRRRRRRRQPVLA). Over residues 315 to 338 (RPRRRATTRRRTTTGTRRRRRRRQ) the composition is skewed to basic residues.

This sequence belongs to the adenoviridae core-capsid bridging protein family. In terms of assembly, monomer. Homodimer. Exists in equilibrium between monomers and dimers in solution. Interacts with the histone-like nucleoprotein; this interactions bridge the virus core to the capsid. Interacts with core protein X; this interactions bridge the virus core to the capsid. Interacts with the endosome lysis protein VI; this interactions bridge the virus core to the capsid. Interacts with the peripentonal hexons. Interacts with host NPM1; this interaction might play a role in virus assembly.

Its subcellular location is the virion. It is found in the host nucleus. The protein resides in the host nucleolus. Its function is as follows. Associates loosely with the viral DNA to form an outer shell around the nucleoprotein-DNA complex and links it with the capsid by binding the endosome lysis protein. Dissociates from the viral genome during entry. Might be involved in nuclear capsid assembly of the viral particles through its association with NPM1/nucleophosmin. The polypeptide is Core-capsid bridging protein (Homo sapiens (Human)).